Here is a 253-residue protein sequence, read N- to C-terminus: MICOS complex subunit mic25 (253 aa).

A disordered region spans residues 1–89; the sequence is MGGSESTGRK…GAHKPTAAGV (89 aa). Gly-2 carries the N-myristoyl glycine lipid modification. The span at 28–44 shows a compositional bias: basic and acidic residues; that stretch reads RLSDEVVNRMKDSDLPS. Over residues 48–64 the composition is skewed to low complexity; that stretch reads STSAASGTASAPAAFPS. The stretch at 94 to 178 forms a coiled coil; that stretch reads AEEDLYRRYE…EQLSSIEKKN (85 aa). The CHCH domain maps to 206–248; the sequence is DPVCMNLQADILKCYSENKQERLNCSNLAKEYRKCVSAAQKNL. 2 consecutive short sequence motifs (cx9C motif) follow at residues 209-219 and 230-240; these read CMNLQADILKC and CSNLAKEYRKC. Disulfide bonds link Cys-209–Cys-240 and Cys-219–Cys-230.

This sequence belongs to the MICOS complex subunit Mic19 family. Metazoan Mic25 subfamily. In terms of assembly, component of the mitochondrial contact site and cristae organizing system (MICOS) complex (also known as MINOS or MitOS complex).

It is found in the mitochondrion inner membrane. In terms of biological role, component of the MICOS complex, a large protein complex of the mitochondrial inner membrane that plays crucial roles in the maintenance of crista junctions, inner membrane architecture, and formation of contact sites to the outer membrane. This is MICOS complex subunit mic25 (chchd6) from Xenopus tropicalis (Western clawed frog).